We begin with the raw amino-acid sequence, 831 residues long: Probable inactive serine/threonine-protein kinase DDB_G0274613 (831 aa).

The segment at 9–63 (CSICSEEVIDFAAIFSSNKKFGDKACKHNFCVSCLTYLMEYNTRNKKALCCPICR) adopts an RING-type zinc-finger fold. Positions 83–348 (RKLSSAQIFL…LEEMKLLYQF (266 aa)) form a coiled coil. In terms of domain architecture, Protein kinase spans 414–787 (QIHKVSIGNG…ANQAAFHKFF (374 aa)). The tract at residues 657 to 703 (NNNNNNNNNNNNNNNNNNNNNNNNNNNNNNNNNNNNNNNNNIESNFN) is disordered.

It belongs to the protein kinase superfamily. CMGC Ser/Thr protein kinase family.

In Dictyostelium discoideum (Social amoeba), this protein is Probable inactive serine/threonine-protein kinase DDB_G0274613.